The primary structure comprises 511 residues: MEITTIIFLIISSLTFSIFLKLIFFFSTHKLPPGPPRFPVIGNIIWLKKNNFSDFQGVLRDLASRHGPIITLHVGSKPSIWVTDRSLAHQALVQNGAVFSDRSLALPTTKVITSNQHDIHSSVYGSLWRTLRRNLTSEILQPSRVKAHAPSRKWSLEILVDLFETEQREKGHISDALDHLRHAMFYLLALMCFGEKLRKEEIREIEEAQYQMLISYTKFSVLNIFPSVTKFLLRRKWKEFLELRKSQESVILRYVNARSKETTGDVLCYVDTLLNLEIPTEEKEGGKKRKLSDSEIVSLCSEFLNAATDPTATSMQWIMAIMVKYPEIQRKVYEEMKTVFAGEEEEREEIREEDLGKLSYLKAVILECLRRHPPGHYLSYHKVTHDTVLGGFLIPRQGTINFMVGEMGRDPKIWEDPLTFKPERFLENGEACDFDMTGTREIKMMPFGAGRRMCPGYALSLLHLEYYVANLVWKFEWKCVEGEEVDLSEKQQFITMVMKNPFKANIYPRRK.

A helical; Signal-anchor for type II membrane protein membrane pass occupies residues 6–26 (IIFLIISSLTFSIFLKLIFFF). A heme-binding site is contributed by cysteine 454.

This sequence belongs to the cytochrome P450 family. Requires heme as cofactor.

It is found in the endoplasmic reticulum membrane. The catalysed reaction is primary fluorescent chlorophyll catabolite + reduced [NADPH--hemoprotein reductase] + O2 = primary fluorescent dioxobilin-type chlorophyll catabolite + formate + oxidized [NADPH--hemoprotein reductase] + 2 H(+). It functions in the pathway porphyrin-containing compound metabolism; chlorophyll degradation. Its function is as follows. Involved in the chlorophyll breakdown by its action in nonpolar primary fluorescent chlorophyll catabolite (pFCC) decarbonylation. Involved in the formation of major chlorophyll breakdown products, including non-fluorescent dioxobilin-type chlorophyll catabolites (NDCCs), during leaf senescence. This Arabidopsis thaliana (Mouse-ear cress) protein is Cytochrome P450 89A9.